Here is a 514-residue protein sequence, read N- to C-terminus: Na(+)/H(+) antiporter NhaB (514 aa).

A run of 12 helical transmembrane segments spans residues 23 to 43 (LALL…PFIA), 63 to 83 (PLLP…TSAA), 97 to 117 (LLLM…LFIF), 120 to 140 (LLLS…AAAF), 144 to 164 (FLDA…FYGI), 202 to 222 (LMMH…VGEP), 238 to 258 (FFLR…LTCM), 303 to 323 (AIIG…VGLI), 357 to 377 (LTVF…APII), 391 to 411 (LFYL…VGTI), 447 to 467 (ATPN…APLI), and 475 to 495 (VWMA…CVEF).

This sequence belongs to the NhaB Na(+)/H(+) (TC 2.A.34) antiporter family.

The protein localises to the cell inner membrane. It carries out the reaction 2 Na(+)(in) + 3 H(+)(out) = 2 Na(+)(out) + 3 H(+)(in). Na(+)/H(+) antiporter that extrudes sodium in exchange for external protons. The sequence is that of Na(+)/H(+) antiporter NhaB from Salmonella paratyphi B (strain ATCC BAA-1250 / SPB7).